The primary structure comprises 67 residues: Small ribosomal subunit protein bS21 (67 aa).

The protein belongs to the bacterial ribosomal protein bS21 family.

This is Small ribosomal subunit protein bS21 from Desulfovibrio desulfuricans (strain ATCC 27774 / DSM 6949 / MB).